A 275-amino-acid chain; its full sequence is 2,3,4,5-tetrahydropyridine-2,6-dicarboxylate N-succinyltransferase (275 aa).

Substrate-binding residues include Arg-104 and Asp-141.

Belongs to the transferase hexapeptide repeat family. In terms of assembly, homotrimer.

It localises to the cytoplasm. The catalysed reaction is (S)-2,3,4,5-tetrahydrodipicolinate + succinyl-CoA + H2O = (S)-2-succinylamino-6-oxoheptanedioate + CoA. It participates in amino-acid biosynthesis; L-lysine biosynthesis via DAP pathway; LL-2,6-diaminopimelate from (S)-tetrahydrodipicolinate (succinylase route): step 1/3. The chain is 2,3,4,5-tetrahydropyridine-2,6-dicarboxylate N-succinyltransferase from Haemophilus influenzae (strain PittEE).